The sequence spans 145 residues: L-alanine exporter AlaE (145 aa).

4 helical membrane-spanning segments follow: residues 16–36, 42–62, 86–106, and 111–131; these read FALV…LSGM, LSSR…YGLY, LFAY…VIGA, and ILTA…TYGY.

This sequence belongs to the AlaE exporter family.

It localises to the cell inner membrane. Exports L-alanine. The polypeptide is L-alanine exporter AlaE (Pectobacterium parmentieri (strain WPP163) (Pectobacterium wasabiae (strain WPP163))).